The primary structure comprises 623 residues: Chaperone protein HtpG (623 aa).

Positions methionine 1–arginine 336 are a; substrate-binding. Residues glutamate 337–arginine 550 form a b region. Positions isoleucine 551–serine 623 are c.

It belongs to the heat shock protein 90 family. In terms of assembly, homodimer.

It is found in the cytoplasm. Its function is as follows. Molecular chaperone. Has ATPase activity. This is Chaperone protein HtpG from Legionella pneumophila subsp. pneumophila (strain Philadelphia 1 / ATCC 33152 / DSM 7513).